The chain runs to 563 residues: Formate--tetrahydrofolate ligase (563 aa).

ATP is bound at residue Thr-65–Thr-72.

This sequence belongs to the formate--tetrahydrofolate ligase family.

The catalysed reaction is (6S)-5,6,7,8-tetrahydrofolate + formate + ATP = (6R)-10-formyltetrahydrofolate + ADP + phosphate. The protein operates within one-carbon metabolism; tetrahydrofolate interconversion. The chain is Formate--tetrahydrofolate ligase from Cutibacterium acnes (strain DSM 16379 / KPA171202) (Propionibacterium acnes).